Consider the following 141-residue polypeptide: Lutropin subunit beta (141 aa).

The N-terminal stretch at 1 to 20 (MERLQGLLLWLLLSPSVVWA) is a signal peptide. Intrachain disulfides connect cysteine 29–cysteine 77, cysteine 43–cysteine 92, cysteine 46–cysteine 130, cysteine 54–cysteine 108, cysteine 58–cysteine 110, and cysteine 113–cysteine 120. Asparagine 33 is a glycosylation site (N-linked (GlcNAc...) asparagine).

Belongs to the glycoprotein hormones subunit beta family. Heterodimer of a common alpha chain and a unique beta chain which confers biological specificity to thyrotropin, lutropin, follitropin and gonadotropin.

The protein localises to the secreted. Functionally, promotes spermatogenesis and ovulation by stimulating the testes and ovaries to synthesize steroids. In Rattus norvegicus (Rat), this protein is Lutropin subunit beta (Lhb).